We begin with the raw amino-acid sequence, 355 residues long: LIM/homeobox protein lim-4 (355 aa).

LIM zinc-binding domains are found at residues 96–155 (VICT…THVT) and 166–228 (PKCA…LVEG). The homeobox DNA-binding region spans 239-298 (TKRVRTTFAEDQLSVLQTYFNRDSNPDGADLEKIASMTGLSKRVTQVWFQNSRARQKKWH). A disordered region spans residues 291–336 (RARQKKWHQKSEGDNGDSQRSSVGPSSPSQKSDSSSEMMYPTSVTT). Over residues 306–326 (GDSQRSSVGPSSPSQKSDSSS) the composition is skewed to low complexity.

As to quaternary structure, interacts with transcription factor sox-2. As to expression, expressed in the AWB sensory neurons and in one RME motor neuron (RMEV), two RMD motor neurons (RMDL and RMDR), the RID, RIV, SAA and SIA interneurons and the SMB sensory/inter/motor neurons.

It is found in the nucleus. Functionally, transcription factor that binds to the promoter of target genes. Regulates genes involved in serotonin synthesis and release in serotonergic ADF neurons. Involved in specification of neuron cell fate, olfactory receptor expression, locomotion, and foraging behavior. Required in AWB olfactory neurons to repress AWC cell fate and promote the AWB cell fate during early development. Cooperates with additional factors to direct the differentiation of the olfactory neurons, functioning with the transcription factor sox-2 to suppress AWC terminal differentiation and promote AWB neuron differentiation. Involved in regulating terminal specification and maintenance of the SMB sensory/inter/motor neurons. Plays a role in regulation of RID motor neuron differentiation, but is dispensable for motor axon outgrowth in the dorsal nerve cord. May regulate its own expression. This Caenorhabditis elegans protein is LIM/homeobox protein lim-4.